The chain runs to 138 residues: Acidic phospholipase A2 AplTX-I (138 aa).

The N-terminal stretch at 1–16 (MRTLWIMAVLLLGVEG) is a signal peptide. 7 disulfides stabilise this stretch: Cys42-Cys131, Cys44-Cys60, Cys59-Cys111, Cys65-Cys138, Cys66-Cys104, Cys73-Cys97, and Cys91-Cys102. 3 residues coordinate Ca(2+): Tyr43, Gly45, and Gly47. The active site involves His63. Ca(2+) is bound at residue Asp64. Asp105 is a catalytic residue.

As to quaternary structure, monomer. Ca(2+) serves as cofactor. As to expression, expressed by the venom gland.

It localises to the secreted. The enzyme catalyses a 1,2-diacyl-sn-glycero-3-phosphocholine + H2O = a 1-acyl-sn-glycero-3-phosphocholine + a fatty acid + H(+). Its activity is regulated as follows. Inhibited by divalent cations different from calcium ions (cadmium, magnesium, manganese, zinc), since they act as competitive antagonists of this cofactor. Functionally, snake venom phospholipase A2 (PLA2) that triggers a high neuromuscular toxicity in chick biventer cervicis preparations, but not in mouse phrenic nerve-diaphragm (PND) preparations, suggesting a selective neurotoxin activity towards birds. Does not induce myotoxic, coagulant, anticoagulant, edema, and antibacterial activities. PLA2 catalyzes the calcium-dependent hydrolysis of the 2-acyl groups in 3-sn-phosphoglycerides. This Agkistrodon piscivorus leucostoma (Western cottonmouth) protein is Acidic phospholipase A2 AplTX-I.